The sequence spans 157 residues: Baculoviral IAP repeat-containing protein 5.2-B (157 aa).

A BIR repeat occupies 31–101 (RLRTFSNWPF…KHSPSCLFIA (71 aa)). Threonine 47 bears the Phosphothreonine; by CDK1 mark. Residues cysteine 70, cysteine 73, histidine 90, and cysteine 97 each contribute to the Zn(2+) site.

It belongs to the IAP family. In terms of assembly, component of the CPC at least composed of survivin/birc5, incenp, cdca8/borealin and/or cdca9/dasra-A, and aurkb/aurora-B. Interacts directly with incenp (via N-terminus). Interacts with rxra; the interaction is stronger in the absence of 9-cis retinoic acids. In terms of processing, ubiquitination is required for centrosome-targeting. As to expression, exhibits strong and homogeneous expression in developing oocytes. In embryos, expressed in the animal hemisphere from one-cell to yolk plug stages, and highly expressed in the future brain and dorsal region of the neural tube at the neurula stage and early tail-bud stage. At tadpole stages, expression is restricted at a low level to the head region.

The protein localises to the cytoplasm. Its subcellular location is the nucleus. It localises to the chromosome. The protein resides in the centromere. It is found in the cytoskeleton. The protein localises to the spindle. In terms of biological role, does not appear to exhibit anti-apoptotic activity. Plays a role in increasing blood vessel size during development. Component of the chromosomal passenger complex (CPC), a complex that acts as a key regulator of mitosis. The CPC complex has essential functions at the centromere in ensuring correct chromosome alignment and segregation and is required for chromatin-induced microtubule stabilization and spindle assembly. The chain is Baculoviral IAP repeat-containing protein 5.2-B (birc5.2-b) from Xenopus laevis (African clawed frog).